Here is a 447-residue protein sequence, read N- to C-terminus: uncharacterized protein (447 aa).

The next 2 helical transmembrane spans lie at 380–400 (VLEI…LLLT) and 412–432 (ILGF…GVYV).

It localises to the cell membrane. This is an uncharacterized protein from Methanocaldococcus jannaschii (strain ATCC 43067 / DSM 2661 / JAL-1 / JCM 10045 / NBRC 100440) (Methanococcus jannaschii).